A 129-amino-acid polypeptide reads, in one-letter code: Type II secretion system protein I (129 aa).

A propeptide spans 1–6 (MKRARG) (leader sequence). Position 7 is an N-methylphenylalanine (F7). A helical membrane pass occupies residues 7–27 (FTLLEVLVALAIFAMVAASVL).

This sequence belongs to the GSP I family. In terms of assembly, type II secretion is composed of four main components: the outer membrane complex, the inner membrane complex, the cytoplasmic secretion ATPase and the periplasm-spanning pseudopilus. Forms the tip of the type II pseudopilus by interacting with XcpU, XcpW and XcpX. Interacts with core component XcpT. Cleaved by prepilin peptidase. In terms of processing, methylated by prepilin peptidase at the amino group of the N-terminal phenylalanine once the leader sequence is cleaved by prepilin peptidase.

It localises to the cell inner membrane. Its function is as follows. Component of the type II secretion system required for the energy-dependent secretion of extracellular factors such as proteases and toxins from the periplasm. Part of the pseudopilus tip complex that is critical for the recognition and binding of secretion substrates. Type II pseudopilus confers increased bacterial adhesive capabilities. The sequence is that of Type II secretion system protein I (xcpV) from Pseudomonas aeruginosa (strain ATCC 15692 / DSM 22644 / CIP 104116 / JCM 14847 / LMG 12228 / 1C / PRS 101 / PAO1).